The primary structure comprises 332 residues: Centrosomal AT-AC splicing factor (332 aa).

Positions 1-169 are required for centrosome location; it reads MAPAQRCPLC…QSRQEVVRSV (169 aa). Residue lysine 31 is modified to N6-acetyllysine; by NAT10. The stretch at 137 to 168 forms a coiled coil; sequence LDSYEEKEDKVIKEMAAQIREVEQSRQEVVRS. Residues 169–213 form a disordered region; it reads VLEPQAVPDPEEGSSAPRSWKGMNSQVASSLQQPSNLDLPPAPEL. The span at 190 to 204 shows a compositional bias: polar residues; that stretch reads GMNSQVASSLQQPSN.

Interacts with SASS6; the interaction increases with CENATAC acetylation. Acetylated. Acetylation oscillates throughout the cell cycle, and the acetylation state at Lys-31 is regulated by the deacetylase SIRT1 and the acetyltransferase NAT10. Deacetylated CENATAC is responsible for its centrosome targeting, and acetylated CENATAC promotes SASS6 degradation by enhancing the binding affinity of SASS6 for APC/C E3 ubiquitin-protein ligase complex/FZR1.

The protein localises to the cytoplasm. It localises to the cytoskeleton. Its subcellular location is the microtubule organizing center. The protein resides in the centrosome. Functionally, component of the minor spliceosome that promotes splicing of a specific, rare minor intron subtype. Negative regulator of centrosome duplication. Constrains centriole number by modulating the degradation of the centrosome-duplication-associated protein SASS6 in an acetylation-dependent manner. SIRT1 deacetylates CENATAC in G1 phase, allowing for SASS6 accumulation on the centrosome and subsequent procentriole assembly. The CENATAC acetylation level is restored in mitosis by NAT10, promoting SASS6 proteasome degradation by facilitating SASS6 binding to APC/C E3 ubiquitin-protein ligase complex/FZR1. This chain is Centrosomal AT-AC splicing factor, found in Homo sapiens (Human).